The primary structure comprises 78 residues: Acyl carrier protein (78 aa).

Residues 1–76 form the Carrier domain; the sequence is MALFEDIQAV…DVVKYIEDNK (76 aa). O-(pantetheine 4'-phosphoryl)serine is present on Ser36.

This sequence belongs to the acyl carrier protein (ACP) family. 4'-phosphopantetheine is transferred from CoA to a specific serine of apo-ACP by AcpS. This modification is essential for activity because fatty acids are bound in thioester linkage to the sulfhydryl of the prosthetic group.

It is found in the cytoplasm. Its pathway is lipid metabolism; fatty acid biosynthesis. Functionally, carrier of the growing fatty acid chain in fatty acid biosynthesis. The protein is Acyl carrier protein of Helicobacter acinonychis (strain Sheeba).